The following is a 580-amino-acid chain: Frizzled-10-B (580 aa).

The signal sequence occupies residues 1–20 (MEPRVVTALLLSLAAALCSG). Over 21–224 (ISSINPDRSG…DVYWSKNDKK (204 aa)) the chain is Extracellular. One can recognise an FZ domain in the interval 29–150 (SGEGRCQAIE…NDPNYLCMEA (122 aa)). 5 cysteine pairs are disulfide-bonded: cysteine 34-cysteine 95, cysteine 42-cysteine 88, cysteine 79-cysteine 117, cysteine 106-cysteine 147, and cysteine 110-cysteine 134. Asparagine 48 is a glycosylation site (N-linked (GlcNAc...) asparagine). Residue asparagine 153 is glycosylated (N-linked (GlcNAc...) asparagine). The interval 173-194 (RPNSGHEMYPKDPKGRSSCENS) is disordered. Residues 180 to 189 (MYPKDPKGRS) are compositionally biased toward basic and acidic residues. A helical transmembrane segment spans residues 225–245 (FAFIWIAIWSLLCFFSSAFTV). Over 246–261 (LTFLVDPLRFKYPERP) the chain is Cytoplasmic. The chain crosses the membrane as a helical span at residues 262–282 (IIFLSMCYCVYSVGYIIRLFA). Residues 283-309 (GADSIACDRDSGQLYVIQEGLESTGCT) are Extracellular-facing. Residues 310 to 330 (IVFLILYYFGMASSLWWVILT) traverse the membrane as a helical segment. The Cytoplasmic segment spans residues 331 to 350 (LTWFLAAGKKWGHEAIEANS). The chain crosses the membrane as a helical span at residues 351 to 371 (SYFHLAAWAIPAVKTIMILVM). Topologically, residues 372 to 392 (RRVAGDELTGVCYVGSMDVNA) are extracellular. A helical membrane pass occupies residues 393–413 (LTGFVLIPLACYLIIGTSFIL). Topologically, residues 414 to 442 (SGFVALFHIRRVMKTGGENTDKLEKLMVR) are cytoplasmic. The chain crosses the membrane as a helical span at residues 443-463 (IGVFSVLYTVPATCVIACYFY). The Extracellular portion of the chain corresponds to 464–501 (ERLNMDFWKILATQDKCKMDSQTKTLDCTMTSSIPAVE). The chain crosses the membrane as a helical span at residues 502-522 (IFMVKIFMLLVVGITSGMWIW). Residues 523–580 (TSKTVQSWQNVFSKSLKKRNRNKPASVITSAGIYKKPQQPPKIHHGKYESALRSPTCV) are Cytoplasmic-facing. The Lys-Thr-X-X-X-Trp motif, mediates interaction with the PDZ domain of Dvl family members signature appears at 525–530 (KTVQSW). Positions 558 to 580 (KPQQPPKIHHGKYESALRSPTCV) are disordered. Residues 578–580 (TCV) carry the PDZ-binding motif.

This sequence belongs to the G-protein coupled receptor Fz/Smo family. Expressed in liver, lung, brain, testis, heart and ovary.

The protein resides in the cell membrane. Functionally, receptor for Wnt proteins. Most of frizzled receptors are coupled to the beta-catenin canonical signaling pathway, which leads to the activation of disheveled proteins, inhibition of GSK-3 kinase, nuclear accumulation of beta-catenin and activation of Wnt target genes. A second signaling pathway involving PKC and calcium fluxes has been seen for some family members, but it is not yet clear if it represents a distinct pathway or if it can be integrated in the canonical pathway, as PKC seems to be required for Wnt-mediated inactivation of GSK-3 kinase. Both pathways seem to involve interactions with G-proteins. May be involved in transduction and intercellular transmission of polarity information during tissue morphogenesis and/or in differentiated tissues. Activated by Wnt8. Could have an antagonizing activity in the morphogenesis during development. The chain is Frizzled-10-B (fzd10-b) from Xenopus laevis (African clawed frog).